We begin with the raw amino-acid sequence, 162 residues long: Nucleotide-binding protein Adeh_0094 (162 aa).

This sequence belongs to the YajQ family.

Nucleotide-binding protein. The sequence is that of Nucleotide-binding protein Adeh_0094 from Anaeromyxobacter dehalogenans (strain 2CP-C).